An 818-amino-acid chain; its full sequence is Phenylalanine--tRNA ligase beta subunit (818 aa).

The region spanning 39–148 (AAELQKFEVA…EDAVVGENFT (110 aa)) is the tRNA-binding domain. The B5 domain occupies 423–498 (PQKKPLDFSA…RIYGYDKIES (76 aa)). Asp-476, Asp-482, Glu-485, and Glu-486 together coordinate Mg(2+). One can recognise an FDX-ACB domain in the interval 724 to 817 (SDFQANFRDY…IEQKFQGTLR (94 aa)).

Belongs to the phenylalanyl-tRNA synthetase beta subunit family. Type 1 subfamily. As to quaternary structure, tetramer of two alpha and two beta subunits. Requires Mg(2+) as cofactor.

Its subcellular location is the cytoplasm. It catalyses the reaction tRNA(Phe) + L-phenylalanine + ATP = L-phenylalanyl-tRNA(Phe) + AMP + diphosphate + H(+). This Rickettsia felis (strain ATCC VR-1525 / URRWXCal2) (Rickettsia azadi) protein is Phenylalanine--tRNA ligase beta subunit.